A 432-amino-acid chain; its full sequence is FMRFamide peptide receptor frpr-18 (432 aa).

Over 1-8 (MESQQLMA) the chain is Extracellular. Residues 9 to 29 (CAILVIVLVGIFGNSLSFILF) traverse the membrane as a helical segment. The Cytoplasmic portion of the chain corresponds to 30–42 (SRPHMRSSSVNVL). A helical transmembrane segment spans residues 43–63 (LCALSFFDFSLLTLSIPIFVI). The Extracellular segment spans residues 64 to 84 (PNLDLWANDLSLSTYMAYILK). A helical transmembrane segment spans residues 85-105 (LIYPINLMMQTCSVYIMVMIT). The Cytoplasmic portion of the chain corresponds to 106–128 (LERWVAVCRPLQVRVWCTPRKSR). Residues 129–149 (NAILVIIVSAFLYNFVRFFEY) traverse the membrane as a helical segment. The Extracellular segment spans residues 150-176 (RFVVTESGALYEKWLRDPGKHRWYYVG). The helical transmembrane segment at 177 to 197 (YYTILYIVTHFLVPFSVMAFA) threads the bilayer. At 198-225 (NGHVIVAMCKLSKTRQMLTRQQQREQST) the chain is on the cytoplasmic side. The chain crosses the membrane as a helical span at residues 226–246 (TVMLLIVTFVFAICNTLPFLL). Over 247-271 (NVSESIFPTLFQDESTRGLAYWLND) the chain is Extracellular. Residues 272 to 292 (LSNLLVVLNSGTTFIIYFTFS) form a helical membrane-spanning segment. At 293–432 (EKYRQTLVFI…GEPDSPCQPC (140 aa)) the chain is on the cytoplasmic side. 2 disordered regions span residues 328–349 (ISSE…SSRS) and 388–411 (KLPS…GMPE).

This sequence belongs to the G-protein coupled receptor 1 family. As to expression, expressed in a subset of neurons in the head, midbody, and tail, including AIY, ASI, BAG, URA, CAN, I6, PVQ, DVA, RIM, and VC, and in the anal sphincter and intestinal muscles. Expression from the ASI neurons is involved in promoting arousal.

The protein resides in the cell membrane. Functionally, G-protein coupled receptor for flp-2 neuropeptides. May act through the G(q) alpha type of G proteins. Involved in mediating arousal from the sleep-like state called lethargus, which occurs during molting between larval and adult stages, in part by regulating touch sensitivity, and working in concert with neuropeptide pdf-1. The polypeptide is FMRFamide peptide receptor frpr-18 (Caenorhabditis elegans).